Here is a 525-residue protein sequence, read N- to C-terminus: Light-independent protochlorophyllide reductase subunit B (525 aa).

Asp-36 is a binding site for [4Fe-4S] cluster. Residue Asp-274 is the Proton donor of the active site. Position 409-410 (409-410) interacts with substrate; sequence GL. A disordered region spans residues 433 to 464; that stretch reads HGGKAVAREESPVAPADLAPAATSDTPAAPSP. The span at 444–464 shows a compositional bias: low complexity; the sequence is PVAPADLAPAATSDTPAAPSP.

This sequence belongs to the ChlB/BchB/BchZ family. In terms of assembly, protochlorophyllide reductase is composed of three subunits; BchL, BchN and BchB. Forms a heterotetramer of two BchB and two BchN subunits. [4Fe-4S] cluster is required as a cofactor.

It catalyses the reaction chlorophyllide a + oxidized 2[4Fe-4S]-[ferredoxin] + 2 ADP + 2 phosphate = protochlorophyllide a + reduced 2[4Fe-4S]-[ferredoxin] + 2 ATP + 2 H2O. The protein operates within porphyrin-containing compound metabolism; bacteriochlorophyll biosynthesis (light-independent). Functionally, component of the dark-operative protochlorophyllide reductase (DPOR) that uses Mg-ATP and reduced ferredoxin to reduce ring D of protochlorophyllide (Pchlide) to form chlorophyllide a (Chlide). This reaction is light-independent. The NB-protein (BchN-BchB) is the catalytic component of the complex. This Rhodobacter capsulatus (strain ATCC BAA-309 / NBRC 16581 / SB1003) protein is Light-independent protochlorophyllide reductase subunit B.